Reading from the N-terminus, the 118-residue chain is Basic phospholipase A2 PA-5 (118 aa).

Cystine bridges form between Cys-11-Cys-71, Cys-27-Cys-117, Cys-29-Cys-45, Cys-44-Cys-98, Cys-51-Cys-91, Cys-60-Cys-84, and Cys-78-Cys-89. 3 residues coordinate Ca(2+): Tyr-28, Gly-30, and Gly-32. Residue His-48 is part of the active site. Position 49 (Asp-49) interacts with Ca(2+). Residue Asp-92 is part of the active site.

Belongs to the phospholipase A2 family. Group I subfamily. D49 sub-subfamily. Ca(2+) serves as cofactor. As to expression, expressed by the venom gland.

The protein localises to the secreted. The catalysed reaction is a 1,2-diacyl-sn-glycero-3-phosphocholine + H2O = a 1-acyl-sn-glycero-3-phosphocholine + a fatty acid + H(+). Functionally, PLA2 catalyzes the calcium-dependent hydrolysis of the 2-acyl groups in 3-sn-phosphoglycerides. In Pseudechis australis (Mulga snake), this protein is Basic phospholipase A2 PA-5.